The chain runs to 312 residues: Putative HTH-type transcriptional regulatory protein TV0294 (312 aa).

Residues 133 to 186 (LRERRNELNLSIGNISSYLGVSRRSVSLYENGSAATIDIFIRLRNILKADIVDH) enclose the HTH cro/C1-type domain. Residues 144–163 (IGNISSYLGVSRRSVSLYEN) constitute a DNA-binding region (H-T-H motif).

The chain is Putative HTH-type transcriptional regulatory protein TV0294 from Thermoplasma volcanium (strain ATCC 51530 / DSM 4299 / JCM 9571 / NBRC 15438 / GSS1).